We begin with the raw amino-acid sequence, 908 residues long: Probable serine/threonine-protein kinase DDB_G0278521 (908 aa).

Over 1–153 (MSNNKIIESL…RGEKLSTLDR (153 aa)) the chain is Extracellular. A helical membrane pass occupies residues 154–174 (IICFSIIYSQDQILLFLLNFI). The Cytoplasmic segment spans residues 175-908 (LSNINCNNNN…SDQNDSDLYD (734 aa)). ANK repeat units follow at residues 258 to 289 (LKVY…NVYN), 300 to 326 (TNRS…NIHD), 330 to 361 (KGML…ALDQ), 362 to 391 (SNNT…RLSI), and 395 to 424 (NGRY…KMNS). Residues 461-472 (NSNNLTNSNSSS) are compositionally biased toward low complexity. The segment at 461–491 (NSNNLTNSNSSSVGGLRISNGGNTQQQSIQI) is disordered. Over residues 480-490 (NGGNTQQQSIQ) the composition is skewed to polar residues. Residues 495–524 (ENNTPIDLLVLNNHFTIAIELLKYEGYIVG) form an ANK 6 repeat. The 288-residue stretch at 530–817 (FKTARKIGAG…LPIANIPKFL (288 aa)) folds into the Protein kinase domain. Residues 536 to 544 (IGAGAFGDV) and K557 each bind ATP. D677 (proton acceptor) is an active-site residue.

The protein belongs to the protein kinase superfamily. TKL Ser/Thr protein kinase family.

Its subcellular location is the membrane. The enzyme catalyses L-seryl-[protein] + ATP = O-phospho-L-seryl-[protein] + ADP + H(+). It catalyses the reaction L-threonyl-[protein] + ATP = O-phospho-L-threonyl-[protein] + ADP + H(+). The protein is Probable serine/threonine-protein kinase DDB_G0278521 of Dictyostelium discoideum (Social amoeba).